Reading from the N-terminus, the 444-residue chain is UPF0761 membrane protein RC1_0578 (444 aa).

6 helical membrane passes run 49 to 69 (LLALVPLLTVTFAIFSAFPAY), 103 to 123 (AAALTGFGVIGLSLTSILLFF), 145 to 165 (LLSFWAVLTIMPLLLGASLSV), 186 to 206 (FMLPGLLEAAAFTLMFLMIPN), 219 to 239 (IAAALLMEVSKVGFGLYIAAF), and 248 to 268 (ALSVIPIFLFWLYTVWSVVLF). The tract at residues 423-444 (SGQPSGQVETAVRQRTGLQGRI) is disordered.

It belongs to the UPF0761 family.

It is found in the cell inner membrane. This chain is UPF0761 membrane protein RC1_0578, found in Rhodospirillum centenum (strain ATCC 51521 / SW).